A 340-amino-acid polypeptide reads, in one-letter code: NAD kinase (340 aa).

Aspartate 66 serves as the catalytic Proton acceptor. Residues 66-67, arginine 71, 141-142, lysine 152, aspartate 171, 182-187, and alanine 206 contribute to the NAD(+) site; these read DG, ND, and TAYAFS. Residues 321-340 are disordered; that stretch reads AGVAGTEPDKPGERDGKAGS. Over residues 327–340 the composition is skewed to basic and acidic residues; it reads EPDKPGERDGKAGS.

The protein belongs to the NAD kinase family. A divalent metal cation is required as a cofactor.

The protein resides in the cytoplasm. It carries out the reaction NAD(+) + ATP = ADP + NADP(+) + H(+). Its function is as follows. Involved in the regulation of the intracellular balance of NAD and NADP, and is a key enzyme in the biosynthesis of NADP. Catalyzes specifically the phosphorylation on 2'-hydroxyl of the adenosine moiety of NAD to yield NADP. This is NAD kinase from Bifidobacterium longum (strain DJO10A).